The chain runs to 170 residues: M-agglutinin (170 aa).

Positions 1–24 (MNLKKIAIASSVFAGITMALTCHA) are cleaved as a signal peptide.

Its function is as follows. This protein is a non-fimbrial hemagglutinin that is specific for blood group M. This Escherichia coli protein is M-agglutinin (bmaE).